The following is a 330-amino-acid chain: GMP reductase (330 aa).

Cys180 serves as the catalytic Thioimidate intermediate. Residue 209–232 participates in NADP(+) binding; it reads LIADGGIRHNGDIAKSVRFGASMV.

It belongs to the IMPDH/GMPR family. GuaC type 2 subfamily.

The catalysed reaction is IMP + NH4(+) + NADP(+) = GMP + NADPH + 2 H(+). In terms of biological role, catalyzes the irreversible NADPH-dependent deamination of GMP to IMP. It functions in the conversion of nucleobase, nucleoside and nucleotide derivatives of G to A nucleotides, and in maintaining the intracellular balance of A and G nucleotides. The polypeptide is GMP reductase (Lactobacillus delbrueckii subsp. bulgaricus (strain ATCC 11842 / DSM 20081 / BCRC 10696 / JCM 1002 / NBRC 13953 / NCIMB 11778 / NCTC 12712 / WDCM 00102 / Lb 14)).